The following is a 400-amino-acid chain: Snake venom metalloproteinase H1 (400 aa).

A signal peptide spans 1-6; it reads FPYQGS. Positions 7–176 are excised as a propeptide; the sequence is SIILESGNVN…KKASQLIVST (170 aa). The Peptidase M12B domain occupies 180–377; that stretch reads RYMEIVIVVD…ENPPCILNKP (198 aa). Ca(2+)-binding residues include Glu183 and Asp267. 3 disulfides stabilise this stretch: Cys291–Cys372, Cys331–Cys356, and Cys333–Cys339. Position 316 (His316) interacts with Zn(2+). The active site involves Glu317. Residues His320 and His326 each contribute to the Zn(2+) site. Ca(2+) is bound by residues Cys372, Asn375, Val387, Asn390, Leu392, Glu394, and Asp400. Residues 378–400 constitute a propeptide that is removed on maturation; the sequence is LRTDTVSTPVSGNELLEAGKDYD.

This sequence belongs to the venom metalloproteinase (M12B) family. P-I subfamily. Monomer. The cofactor is Zn(2+). Expressed by the venom gland.

The protein localises to the secreted. In terms of biological role, snake venom metalloproteinase that impairs hemostasis in the envenomed animal. In Deinagkistrodon acutus (Hundred-pace snake), this protein is Snake venom metalloproteinase H1.